A 182-amino-acid polypeptide reads, in one-letter code: Bifunctional protein PyrR (182 aa).

The PRPP-binding motif lies at 100 to 112 (VVLVDDVLYTGRT).

The protein belongs to the purine/pyrimidine phosphoribosyltransferase family. PyrR subfamily. Homodimer and homohexamer; in equilibrium.

The enzyme catalyses UMP + diphosphate = 5-phospho-alpha-D-ribose 1-diphosphate + uracil. Functionally, regulates transcriptional attenuation of the pyrimidine nucleotide (pyr) operon by binding in a uridine-dependent manner to specific sites on pyr mRNA. This disrupts an antiterminator hairpin in the RNA and favors formation of a downstream transcription terminator, leading to a reduced expression of downstream genes. In terms of biological role, also displays a weak uracil phosphoribosyltransferase activity which is not physiologically significant. The chain is Bifunctional protein PyrR from Natranaerobius thermophilus (strain ATCC BAA-1301 / DSM 18059 / JW/NM-WN-LF).